The sequence spans 478 residues: Signal recognition particle receptor FtsY (478 aa).

2 stretches are compositionally biased toward basic and acidic residues: residues 14–33 (KDKA…ERGN) and 45–56 (AEAHDAVDKDPV). Residues 14 to 94 (KDKAETEERP…DAPLLPGAEL (81 aa)) are disordered. The segment covering 71-86 (EAVDVAPAEDDEEEDA) has biased composition (acidic residues). GTP-binding positions include 283–290 (GVNGTGKT), 365–369 (DTAGR), and 429–432 (TKLD).

Belongs to the GTP-binding SRP family. FtsY subfamily. As to quaternary structure, part of the signal recognition particle protein translocation system, which is composed of SRP and FtsY. SRP is a ribonucleoprotein composed of Ffh and a 4.5S RNA molecule.

It is found in the cell inner membrane. The protein localises to the cytoplasm. It catalyses the reaction GTP + H2O = GDP + phosphate + H(+). Its function is as follows. Involved in targeting and insertion of nascent membrane proteins into the cytoplasmic membrane. Acts as a receptor for the complex formed by the signal recognition particle (SRP) and the ribosome-nascent chain (RNC). Interaction with SRP-RNC leads to the transfer of the RNC complex to the Sec translocase for insertion into the membrane, the hydrolysis of GTP by both Ffh and FtsY, and the dissociation of the SRP-FtsY complex into the individual components. The chain is Signal recognition particle receptor FtsY from Agrobacterium fabrum (strain C58 / ATCC 33970) (Agrobacterium tumefaciens (strain C58)).